A 2280-amino-acid chain; its full sequence is Protein Ycf2 (2280 aa).

1631–1638 contacts ATP; that stretch reads GSIGTGRS.

Belongs to the Ycf2 family.

The protein resides in the plastid. Its subcellular location is the chloroplast stroma. Its function is as follows. Probable ATPase of unknown function. Its presence in a non-photosynthetic plant (Epifagus virginiana) and experiments in tobacco indicate that it has an essential function which is probably not related to photosynthesis. This chain is Protein Ycf2 (ycf2-A), found in Nicotiana tabacum (Common tobacco).